A 398-amino-acid chain; its full sequence is Acetate kinase (398 aa).

Asparagine 9 contributes to the Mg(2+) binding site. Lysine 16 contacts ATP. A substrate-binding site is contributed by arginine 90. The Proton donor/acceptor role is filled by aspartate 147. ATP-binding positions include 207 to 211 (HIGNG), 282 to 284 (DLR), and 330 to 334 (GVGEN). A Mg(2+)-binding site is contributed by glutamate 384.

The protein belongs to the acetokinase family. Homodimer. Mg(2+) serves as cofactor. The cofactor is Mn(2+).

Its subcellular location is the cytoplasm. The catalysed reaction is acetate + ATP = acetyl phosphate + ADP. Its pathway is metabolic intermediate biosynthesis; acetyl-CoA biosynthesis; acetyl-CoA from acetate: step 1/2. Its function is as follows. Catalyzes the formation of acetyl phosphate from acetate and ATP. Can also catalyze the reverse reaction. This chain is Acetate kinase, found in Staphylococcus carnosus (strain TM300).